The sequence spans 469 residues: MRRRESRGAKGGGFLTPPPSWHTTRRVYIAMPISERKRSPLIENQESFRVRTGDSPYVRAKHAQLVSKDPNRAISLFWAAINAGDRVDSALKDMVVVLKQLNRFDEGIEAIKSFRYLCPFESQDSIDNLLLELYMKSGRITEVAELLEHKLRTLEQDKHYGGRIKIAKRSHEEQNNKTIEQEKARILGNLAWVHLQLHNYGIAEQYYRNALSLEPDNNKLCNLAICLIRMERTHEAKSLLEDVKQSLGNQWKNEPFCKSFERATEMLAEREQATVADKPEDLLTSSFSDNFSSRCSGGMKGKKALAGTSTELGNIHKTNSHASSESVEQNSPGLTTQPRECKWVDEEVDQSKWDATIGASRKLRFWTVGPVRSLRFGNDYQKNLKSVGTAASTTNDELHQFISSDADCMTSKARKLCPELIKDKEDNEKESERIASESSSAYAKITDIGQRKVLHIDQRKVRHIGQRSV.

The interval M1 to S20 is disordered. 3 TPR repeats span residues D88–E121, D124–D157, and A184–N217. Positions R139–A191 form a coiled coil. Residues N314–P338 are compositionally biased toward polar residues. The tract at residues N314–R339 is disordered.

This sequence belongs to the MS5 protein family. As to expression, expressed in floral and vegetative organs. Also barely detectable in leaves and stems.

It localises to the nucleus. Probably involved in the regulation of cell division. This chain is Protein POLLENLESS 3-LIKE 1, found in Arabidopsis thaliana (Mouse-ear cress).